The sequence spans 325 residues: Hydroxymethylglutaryl-CoA lyase, mitochondrial (325 aa).

A mitochondrion-targeting transit peptide spans 1–27; the sequence is MAAMTKALPRRLVGLASLRAVSTSSMD. A Pyruvate carboxyltransferase domain is found at 33–300; the sequence is VKIVEVGPRD…HTGVNLQKLL (268 aa). Arginine 41 contacts substrate. Residue aspartate 42 participates in a divalent metal cation binding. N6-acetyllysine; alternate is present on lysine 48. Position 48 is an N6-succinyllysine; alternate (lysine 48). Position 111 is an N6-acetyllysine (lysine 111). N6-acetyllysine; alternate is present on residues lysine 137 and lysine 179. Lysine 137 and lysine 179 each carry N6-succinyllysine; alternate. A divalent metal cation-binding residues include histidine 233 and histidine 235. The active site involves cysteine 266. Asparagine 275 provides a ligand contact to a divalent metal cation. The Microbody targeting signal signature appears at 323–325; it reads CKL. Lysine 324 is modified (N6-acetyllysine).

It belongs to the HMG-CoA lyase family. As to quaternary structure, homodimer; disulfide-linked. Can also form homotetramers.

It localises to the mitochondrion matrix. The protein resides in the peroxisome. The enzyme catalyses (3S)-3-hydroxy-3-methylglutaryl-CoA = acetoacetate + acetyl-CoA. Its pathway is metabolic intermediate metabolism; (S)-3-hydroxy-3-methylglutaryl-CoA degradation; acetoacetate from (S)-3-hydroxy-3-methylglutaryl-CoA: step 1/1. Mitochondrial 3-hydroxy-3-methylglutaryl-CoA lyase that catalyzes a cation-dependent cleavage of (S)-3-hydroxy-3-methylglutaryl-CoA into acetyl-CoA and acetoacetate, a key step in ketogenesis. Terminal step in leucine catabolism. Ketone bodies (beta-hydroxybutyrate, acetoacetate and acetone) are essential as an alternative source of energy to glucose, as lipid precursors and as regulators of metabolism. This is Hydroxymethylglutaryl-CoA lyase, mitochondrial (HMGCL) from Macaca fascicularis (Crab-eating macaque).